The following is a 119-amino-acid chain: Ribonuclease P protein component (119 aa).

Belongs to the RnpA family. Consists of a catalytic RNA component (M1 or rnpB) and a protein subunit.

It catalyses the reaction Endonucleolytic cleavage of RNA, removing 5'-extranucleotides from tRNA precursor.. Its function is as follows. RNaseP catalyzes the removal of the 5'-leader sequence from pre-tRNA to produce the mature 5'-terminus. It can also cleave other RNA substrates such as 4.5S RNA. The protein component plays an auxiliary but essential role in vivo by binding to the 5'-leader sequence and broadening the substrate specificity of the ribozyme. The sequence is that of Ribonuclease P protein component from Bacillus cereus (strain ATCC 14579 / DSM 31 / CCUG 7414 / JCM 2152 / NBRC 15305 / NCIMB 9373 / NCTC 2599 / NRRL B-3711).